Consider the following 155-residue polypeptide: Small ribosomal subunit protein uS7c (155 aa).

The protein belongs to the universal ribosomal protein uS7 family. Part of the 30S ribosomal subunit.

The protein localises to the plastid. It localises to the chloroplast. Functionally, one of the primary rRNA binding proteins, it binds directly to 16S rRNA where it nucleates assembly of the head domain of the 30S subunit. The polypeptide is Small ribosomal subunit protein uS7c (rps7) (Stewartia pseudocamellia (Japanese stewartia)).